A 353-amino-acid chain; its full sequence is Photosystem II protein D1 (353 aa).

Threonine 2 is modified (N-acetylthreonine). At threonine 2 the chain carries Phosphothreonine. A run of 3 helical transmembrane segments spans residues 29–46 (YIGW…TATS), 118–133 (HFLL…EWEL), and 142–156 (WIAV…AATA). Histidine 118 serves as a coordination point for chlorophyll a. Tyrosine 126 contacts pheophytin a. [CaMn4O5] cluster-binding residues include aspartate 170 and glutamate 189. The helical transmembrane segment at 197 to 218 (FHMLGVAGVFGGSLFSAMHGSL) threads the bilayer. Residue histidine 198 coordinates chlorophyll a. Residues histidine 215 and 264 to 265 (SF) each bind a quinone. Residue histidine 215 coordinates Fe cation. Histidine 272 contributes to the Fe cation binding site. Residues 274–288 (FLAAWPVVGIWFTAL) traverse the membrane as a helical segment. Histidine 332, glutamate 333, aspartate 342, and alanine 344 together coordinate [CaMn4O5] cluster. The propeptide occupies 345-353 (AVEAPSING).

This sequence belongs to the reaction center PufL/M/PsbA/D family. In terms of assembly, PSII is composed of 1 copy each of membrane proteins PsbA, PsbB, PsbC, PsbD, PsbE, PsbF, PsbH, PsbI, PsbJ, PsbK, PsbL, PsbM, PsbT, PsbX, PsbY, PsbZ, Psb30/Ycf12, at least 3 peripheral proteins of the oxygen-evolving complex and a large number of cofactors. It forms dimeric complexes. The cofactor is The D1/D2 heterodimer binds P680, chlorophylls that are the primary electron donor of PSII, and subsequent electron acceptors. It shares a non-heme iron and each subunit binds pheophytin, quinone, additional chlorophylls, carotenoids and lipids. D1 provides most of the ligands for the Mn4-Ca-O5 cluster of the oxygen-evolving complex (OEC). There is also a Cl(-1) ion associated with D1 and D2, which is required for oxygen evolution. The PSII complex binds additional chlorophylls, carotenoids and specific lipids.. Tyr-161 forms a radical intermediate that is referred to as redox-active TyrZ, YZ or Y-Z. In terms of processing, C-terminally processed by CTPA; processing is essential to allow assembly of the oxygen-evolving complex and thus photosynthetic growth.

It localises to the plastid. It is found in the chloroplast thylakoid membrane. The catalysed reaction is 2 a plastoquinone + 4 hnu + 2 H2O = 2 a plastoquinol + O2. This is one of the two reaction center proteins of photosystem II. In terms of biological role, photosystem II (PSII) is a light-driven water:plastoquinone oxidoreductase that uses light energy to abstract electrons from H(2)O, generating O(2) and a proton gradient subsequently used for ATP formation. It consists of a core antenna complex that captures photons, and an electron transfer chain that converts photonic excitation into a charge separation. The D1/D2 (PsbA/PsbD) reaction center heterodimer binds P680, the primary electron donor of PSII as well as several subsequent electron acceptors. This Pisum sativum (Garden pea) protein is Photosystem II protein D1.